A 1323-amino-acid polypeptide reads, in one-letter code: Receptor tyrosine-protein kinase let-23 (1323 aa).

The signal sequence occupies residues 1 to 20 (MRYPPSIGSILLIIPIFLTF). The Extracellular portion of the chain corresponds to 21-818 (FGNSNAQLWK…DIASRQRKTR (798 aa)). 2 N-linked (GlcNAc...) asparagine glycosylation sites follow: Asn91 and Asn169. Cystine bridges form between Cys220–Cys228, Cys224–Cys236, Cys244–Cys251, Cys248–Cys262, Cys263–Cys271, Cys267–Cys279, Cys282–Cys291, Cys295–Cys322, Cys326–Cys337, Cys341–Cys356, and Cys359–Cys364. A glycan (N-linked (GlcNAc...) asparagine) is linked at Asn255. The N-linked (GlcNAc...) asparagine glycan is linked to Asn376. 20 disulfides stabilise this stretch: Cys520-Cys529, Cys524-Cys537, Cys540-Cys549, Cys553-Cys567, Cys570-Cys577, Cys574-Cys585, Cys588-Cys604, Cys608-Cys620, Cys623-Cys632, Cys627-Cys644, Cys647-Cys660, Cys670-Cys693, Cys696-Cys703, Cys700-Cys715, Cys717-Cys731, Cys735-Cys750, Cys753-Cys763, Cys757-Cys771, Cys774-Cys787, and Cys791-Cys805. Asn561 carries N-linked (GlcNAc...) asparagine glycosylation. A glycan (N-linked (GlcNAc...) asparagine) is linked at Asn655. N-linked (GlcNAc...) asparagine glycosylation occurs at Asn746. Asn776 is a glycosylation site (N-linked (GlcNAc...) asparagine). A helical transmembrane segment spans residues 819–839 (MVIIGSVLFGFAVMFLFILLV). The Cytoplasmic segment spans residues 840 to 1323 (YWRCQRIGKK…EEVSQKETCL (484 aa)). One can recognise a Protein kinase domain in the interval 885-1152 (TKLDKKLGAG…EFCKVPQLFL (268 aa)). ATP-binding positions include 891-899 (LGAGAFGTV) and Lys919. The Proton acceptor role is filled by Asp1010. Polar residues predominate over residues 1265-1289 (GQTELSPSNGDYYNQPNTPSSSSGY). Positions 1265-1323 (GQTELSPSNGDYYNQPNTPSSSSGYYNEPHLKTKKPETSEEAEAVQYENEEVSQKETCL) are disordered. The segment covering 1293–1302 (PHLKTKKPET) has biased composition (basic and acidic residues). The span at 1303–1315 (SEEAEAVQYENEE) shows a compositional bias: acidic residues.

It belongs to the protein kinase superfamily. Tyr protein kinase family. EGF receptor subfamily. As to expression, expressed in vulval precursor cells (at protein level). Expressed in ALA neurons, 2 ventral head neurons, a single neuron in the tail, pharyngeal-intestinal valve and posterior arcade epithelial cells.

The protein resides in the apical cell membrane. It localises to the basolateral cell membrane. It catalyses the reaction L-tyrosyl-[protein] + ATP = O-phospho-L-tyrosyl-[protein] + ADP + H(+). Tyrosine-protein kinase receptor which, upon binding ligand lin-3, activates 2 signaling cascades: the let-60/Ras and MAP kinase signaling pathway and the let-60-independent phospholipase C-mediated Ca(2+) signaling pathway. Each pathway regulates distinct functions. By activating let-60/Ras, regulates larval development, induction of vulva cell precursors during vulva development, male spicule formation and posterior development of the epidermis. Probably by activating phospholipase plc-3 and inositol 1,4,5-trisphosphate receptor itr-1 signaling cascade downstream of ligand lin-3, plays a role in ovulation by promoting ovulatory gonadal sheath cell contractions. Probably by regulating neuronal transmission in ALA neurons, mediates, independently of let-60/Ras, the decrease in pharyngeal pumping and locomotion during the quiescent state that precedes each larval molt, downstream of lin-3 and upstream of plc-3. This chain is Receptor tyrosine-protein kinase let-23, found in Caenorhabditis elegans.